Here is a 460-residue protein sequence, read N- to C-terminus: uncharacterized protein (460 aa).

A TRAM domain is found at 8–66 (PVEKNEFIDVVFEDLTHDGAGVAKVKGYPIFVKNGLPGEEAQIKIIKVKKNFAFGRLMK). [4Fe-4S] cluster-binding residues include Cys-79, Cys-85, Cys-88, and Cys-166. S-adenosyl-L-methionine is bound by residues Gln-290, Tyr-319, Glu-340, and Asp-388. The active-site Nucleophile is Cys-415.

This sequence belongs to the class I-like SAM-binding methyltransferase superfamily. RNA M5U methyltransferase family.

This is an uncharacterized protein from Bacillus cereus (strain ATCC 10987 / NRS 248).